The following is an 858-amino-acid chain: Elongation factor 2 (858 aa).

One can recognise a tr-type G domain in the interval Ala-17–Val-362. Residue Ala-26–Ser-33 participates in GTP binding. Thr-54 carries the post-translational modification Phosphothreonine. Thr-57 carries the post-translational modification Phosphothreonine; by EEF2K. At Thr-59 the chain carries Phosphothreonine. Lys-152 carries the post-translational modification N6-succinyllysine. Residues Asn-158–Asp-161 and Ser-216–Leu-218 each bind GTP. N6-acetyllysine is present on Lys-235. Lys-239 bears the N6-acetyllysine; alternate mark. Residue Lys-239 forms a Glycyl lysine isopeptide (Lys-Gly) (interchain with G-Cter in SUMO1); alternate linkage. The residue at position 265 (Tyr-265) is a Phosphotyrosine; by CSK. Lys-272 is subject to N6-acetyllysine; alternate. Lys-272 is subject to N6-succinyllysine; alternate. Lys-275 bears the N6-acetyllysine mark. Lys-322 participates in a covalent cross-link: Glycyl lysine isopeptide (Lys-Gly) (interchain with G-Cter in SUMO). Ser-325 carries the phosphoserine modification. A Phosphotyrosine; by CSK modification is found at Tyr-373. Thr-435 carries the phosphothreonine modification. Residues Lys-439 and Lys-445 each carry the N6-acetyllysine modification. Ser-502 carries the phosphoserine modification. At Lys-525 the chain carries N6,N6,N6-trimethyllysine; by EEF2KMT. A Glycyl lysine isopeptide (Lys-Gly) (interchain with G-Cter in SUMO) cross-link involves residue Lys-529. N6-succinyllysine is present on Lys-572. The residue at position 595 (Ser-595) is a Phosphoserine; by CDK2. Lys-619 bears the N6-acetyllysine mark. His-715 carries the post-translational modification Diphthamide.

Belongs to the TRAFAC class translation factor GTPase superfamily. Classic translation factor GTPase family. EF-G/EF-2 subfamily. Binds to 80S ribosomes. Actively translating ribosomes show mutually exclusive binding of eIF5a (EIF5A or EIF5A2) and EEF2/eEF2. Interacts with SERBP1; interaction sequesters EEF2/eEF2 at the A-site of the ribosome, thereby blocking the interaction sites of the mRNA-tRNA complex, promoting ribosome stabilization and hibernation. Interacts with HABP4; interaction takes place at the A-site of hibernating ribosomes and promotes ribosome stabilization. Component of the mRNA surveillance SURF complex, at least composed of ERF1, ERF3 (ERF3A or ERF3B), EEF2, UPF1/RENT1, SMG1, SMG8 and SMG9. Interacts with RBPMS2. Post-translationally, phosphorylation by EF-2 kinase completely inactivates EF-2; it requires prior phosphorylation by CDK2 at Ser-595 during mitotic prometaphase. Phosphorylation by CSK promotes SUMOylation, proteolytic cleavage, and nuclear translocation if the C-terminal fragment. Diphthamide is 2-[3-carboxyamido-3-(trimethyl-ammonio)propyl]histidine. In terms of processing, ISGylated. Post-translationally, proteolytically processed at two sites following phosphorylation by CSK. SUMOylated following phosphorylation by CSK, promotes proteolytic cleavage.

The protein resides in the cytoplasm. The protein localises to the nucleus. It carries out the reaction GTP + H2O = GDP + phosphate + H(+). Catalyzes the GTP-dependent ribosomal translocation step during translation elongation. During this step, the ribosome changes from the pre-translocational (PRE) to the post-translocational (POST) state as the newly formed A-site-bound peptidyl-tRNA and P-site-bound deacylated tRNA move to the P and E sites, respectively. Catalyzes the coordinated movement of the two tRNA molecules, the mRNA and conformational changes in the ribosome. This chain is Elongation factor 2 (EEF2), found in Pongo abelii (Sumatran orangutan).